A 217-amino-acid chain; its full sequence is GTP cyclohydrolase-2 (217 aa).

50-54 serves as a coordination point for GTP; sequence RIHSE. Residues C55, C66, and C68 each contribute to the Zn(2+) site. GTP is bound by residues Q71, 93-95, and T115; that span reads EGR. Catalysis depends on D127, which acts as the Proton acceptor. R129 (nucleophile) is an active-site residue. GTP is bound by residues T150 and K155.

Belongs to the GTP cyclohydrolase II family. Zn(2+) is required as a cofactor.

The catalysed reaction is GTP + 4 H2O = 2,5-diamino-6-hydroxy-4-(5-phosphoribosylamino)-pyrimidine + formate + 2 phosphate + 3 H(+). It participates in cofactor biosynthesis; riboflavin biosynthesis; 5-amino-6-(D-ribitylamino)uracil from GTP: step 1/4. Its function is as follows. Catalyzes the conversion of GTP to 2,5-diamino-6-ribosylamino-4(3H)-pyrimidinone 5'-phosphate (DARP), formate and pyrophosphate. The protein is GTP cyclohydrolase-2 of Actinobacillus succinogenes (strain ATCC 55618 / DSM 22257 / CCUG 43843 / 130Z).